Consider the following 251-residue polypeptide: Ditrans,polycis-undecaprenyl-diphosphate synthase ((2E,6E)-farnesyl-diphosphate specific) (251 aa).

Residue D21 is part of the active site. D21 lines the Mg(2+) pocket. Substrate-binding positions include 22–25, W26, H38, and 66–68; these read GNNR and SSE. Residue N69 is the Proton acceptor of the active site. Substrate-binding positions include W70, R72, R189, and 195–197; that span reads RIS. Position 208 (E208) interacts with Mg(2+).

The protein belongs to the UPP synthase family. As to quaternary structure, homodimer. Requires Mg(2+) as cofactor.

The catalysed reaction is 8 isopentenyl diphosphate + (2E,6E)-farnesyl diphosphate = di-trans,octa-cis-undecaprenyl diphosphate + 8 diphosphate. Its function is as follows. Catalyzes the sequential condensation of isopentenyl diphosphate (IPP) with (2E,6E)-farnesyl diphosphate (E,E-FPP) to yield (2Z,6Z,10Z,14Z,18Z,22Z,26Z,30Z,34E,38E)-undecaprenyl diphosphate (di-trans,octa-cis-UPP). UPP is the precursor of glycosyl carrier lipid in the biosynthesis of bacterial cell wall polysaccharide components such as peptidoglycan and lipopolysaccharide. The chain is Ditrans,polycis-undecaprenyl-diphosphate synthase ((2E,6E)-farnesyl-diphosphate specific) from Pseudomonas syringae pv. tomato (strain ATCC BAA-871 / DC3000).